Here is a 406-residue protein sequence, read N- to C-terminus: Tyrosine--tRNA ligase (406 aa).

Tyrosine 39 provides a ligand contact to L-tyrosine. Residues 44-53 (PTADSLHVGH) carry the 'HIGH' region motif. Residues tyrosine 172 and glutamine 176 each contribute to the L-tyrosine site. The short motif at 232-236 (KMGKT) is the 'KMSKS' region element. Lysine 235 serves as a coordination point for ATP. One can recognise an S4 RNA-binding domain in the interval 344-404 (KELLDVLVDR…LGKKKFYNIV (61 aa)).

It belongs to the class-I aminoacyl-tRNA synthetase family. TyrS type 1 subfamily. In terms of assembly, homodimer.

The protein resides in the cytoplasm. The catalysed reaction is tRNA(Tyr) + L-tyrosine + ATP = L-tyrosyl-tRNA(Tyr) + AMP + diphosphate + H(+). In terms of biological role, catalyzes the attachment of tyrosine to tRNA(Tyr) in a two-step reaction: tyrosine is first activated by ATP to form Tyr-AMP and then transferred to the acceptor end of tRNA(Tyr). The chain is Tyrosine--tRNA ligase from Fusobacterium nucleatum subsp. nucleatum (strain ATCC 25586 / DSM 15643 / BCRC 10681 / CIP 101130 / JCM 8532 / KCTC 2640 / LMG 13131 / VPI 4355).